The primary structure comprises 538 residues: Probable bifunctional riboflavin biosynthesis protein RIBA 1, chloroplastic (538 aa).

Residues 1–16 show a composition bias toward polar residues; the sequence is MSRLSSIYSQHRTSGL. The interval 1–29 is disordered; sequence MSRLSSIYSQHRTSGLRSDRSIMPNSTSN. Residues 1–73 constitute a chloroplast transit peptide; sequence MSRLSSIYSQ…NGQASPSKVV (73 aa). Positions 46–311 are DHBP synthase; sequence RNFHISHAVG…IADLIRYRRK (266 aa). Residues 134-135, D139, 249-253, and E273 contribute to the D-ribulose 5-phosphate site; these read RE and RAGHT. E135 is a binding site for Mg(2+). H252 contacts Mg(2+). The interval 312–530 is GTP cyclohydrolase II; sequence RDRLVERVCV…DGGIKKEQDQ (219 aa). Residue 362–366 coordinates GTP; the sequence is RVHSE. Residues C367, C378, and C380 each contribute to the Zn(2+) site. GTP contacts are provided by residues Q383, 406–408, and T428; that span reads EGR. The Proton acceptor; for GTP cyclohydrolase activity role is filled by D440. R442 functions as the Nucleophile; for GTP cyclohydrolase activity in the catalytic mechanism. GTP is bound by residues T463 and K468. The segment at 506 to 538 is disordered; the sequence is HVYGTRPSGNTSTLADGGIKKEQDQIDSASEQE.

This sequence in the N-terminal section; belongs to the DHBP synthase family. It in the C-terminal section; belongs to the GTP cyclohydrolase II family. Mg(2+) is required as a cofactor. It depends on Mn(2+) as a cofactor. The cofactor is Zn(2+).

Its subcellular location is the plastid. It is found in the chloroplast. It carries out the reaction D-ribulose 5-phosphate = (2S)-2-hydroxy-3-oxobutyl phosphate + formate + H(+). The catalysed reaction is GTP + 4 H2O = 2,5-diamino-6-hydroxy-4-(5-phosphoribosylamino)-pyrimidine + formate + 2 phosphate + 3 H(+). It participates in cofactor biosynthesis; riboflavin biosynthesis; 2-hydroxy-3-oxobutyl phosphate from D-ribulose 5-phosphate: step 1/1. Its pathway is cofactor biosynthesis; riboflavin biosynthesis; 5-amino-6-(D-ribitylamino)uracil from GTP: step 1/4. Its function is as follows. Involved in riboflavin biosynthesis. Catalyzes both the conversion of D-ribulose 5-phosphate to formate and 3,4-dihydroxy-2-butanone 4-phosphate and the conversion of GTP to 2,5-diamino-6-ribosylamino-4(3H)-pyrimidinone 5'-phosphate (DARP), formate and pyrophosphate. This is Probable bifunctional riboflavin biosynthesis protein RIBA 1, chloroplastic (RIBA1) from Oryza sativa subsp. japonica (Rice).